A 527-amino-acid polypeptide reads, in one-letter code: MRSEKSALVFLLLQLFCVGCGFCGKVLVWPCDMSHWLNVKVILEELIVRGHEVTVLTHSKSLLIDYRKPSALKFEVVHMPQDKTEGNEVFVDLALNVLPGLPTWQSVIKLNDFFVEIRGTLKMMCESFIYNQTLMKKLQETNYDVMLIDPVIPCGDLMAELLAVPFVLTLRISLGGNMERSCGKLPAPLSYVPVPMTGLTDRMTFLERVKNSMLSVFFHFWIQDYDYHFWEEFYSKALGRPTTLCETVGKAEIWLIRTYWDFEFPQPYQPNFEFVGGLHCKPAKALPKEMENFVQSSGEDGIVVFSLGSLFQNVTEEKANIIASALAQIPQKVLWRYKGKKPSTLGTNTRLYDWIPQNDLLGHPKTKAFITHGGMNGIYEAIYHGVPMVGVPIFGDQLDNIAHMKAKGAAVEINFKTMTSEDLLRALRTVTTNSSYKENAMRLSRIHHDQPVKPLDRAVFWIEFVMRHKGAKHLRSAAHNLTWFQHYSIDVIGFLLACVATAIFLFTKCCLFSCQKFNKTRKIEKRE.

The first 23 residues, 1–23 (MRSEKSALVFLLLQLFCVGCGFC), serve as a signal peptide directing secretion. Residues 24-486 (GKVLVWPCDM…AAHNLTWFQH (463 aa)) are Extracellular-facing. N-linked (GlcNAc...) asparagine glycosylation is present at asparagine 313. Residues 487–507 (YSIDVIGFLLACVATAIFLFT) traverse the membrane as a helical segment. Over 508 to 523 (KCCLFSCQKFNKTRKI) the chain is Cytoplasmic.

The protein belongs to the UDP-glycosyltransferase family.

It localises to the membrane. It catalyses the reaction glucuronate acceptor + UDP-alpha-D-glucuronate = acceptor beta-D-glucuronoside + UDP + H(+). In terms of biological role, UDP-glucuronosyltransferases catalyze phase II biotransformation reactions in which lipophilic substrates are conjugated with glucuronic acid to increase water solubility and enhance excretion. They are of major importance in the conjugation and subsequent elimination of potentially toxic xenobiotics and endogenous compounds. The chain is UDP-glucuronosyltransferase 2A3 (UGT2A3) from Pongo abelii (Sumatran orangutan).